A 410-amino-acid chain; its full sequence is Exodeoxyribonuclease 7 large subunit (410 aa).

It belongs to the XseA family. In terms of assembly, heterooligomer composed of large and small subunits.

It is found in the cytoplasm. The enzyme catalyses Exonucleolytic cleavage in either 5'- to 3'- or 3'- to 5'-direction to yield nucleoside 5'-phosphates.. In terms of biological role, bidirectionally degrades single-stranded DNA into large acid-insoluble oligonucleotides, which are then degraded further into small acid-soluble oligonucleotides. The polypeptide is Exodeoxyribonuclease 7 large subunit (Alkaliphilus metalliredigens (strain QYMF)).